Reading from the N-terminus, the 280-residue chain is Chaperone for lacto-N-biosidase (280 aa).

Residues 1–37 (MPRRHRFAAAIAAVAVAAVLLVTLTVAVVTHGDGAFA) form the signal peptide.

In terms of assembly, homodimer.

It localises to the secreted. In terms of biological role, chaperone required for active expression of the lacto-N-biosidase LnbX. In Bifidobacterium longum subsp. longum (strain ATCC 15707 / DSM 20219 / JCM 1217 / NCTC 11818 / E194b), this protein is Chaperone for lacto-N-biosidase.